A 728-amino-acid chain; its full sequence is MSDRIDRDVINALIAGHFADPFSVLGMHKTTAGLEVRALLPDATDVWVIEPKTGRKLAKLECLDSRGFFSGVIPRRKNFFRYQLAVVWHGQQNLIDDPYRFGPLIQEMDAWLLSEGTHLRPYETLGAHADTMDGVTGTRFSVWAPNARRVSVVGQFNYWDGRRHPMRLRKESGIWELFIPGAHNGQLYKYEMIDANGNLRLKSDPYAFEAQMRPETASLICGLPEKVVQTEERKKANQFDAPISIYEVHLGSWRRHTDNNFWLSYRELADQLVPYAKWMGFTHLELLPINEHPFDGSWGYQPTGLYAPTRRFGTRDDFRYFIDAAHAAGLNVILDWVPGHFPTDDFALAEFDGTNLYEHSDPREGYHQDWNTLIYNYGRREVSNFLVGNALYWIERFGIDALRVDAVASMIYRDYSRKEGEWIPNEFGGRENLEAIEFLRNTNRILGEQVSGAVTMAEESTDFPGVSRPQDMGGLGFWYKWNLGWMHDTLDYMKLDPIYRQYHHDKLTFGMLYNYTENFVLPLSHDEVVHGKKSILDRMPGDAWQKFASLRAYYGWMWAFPGKKLLFMGNEFAQAREWNHDASLDWHLLEGGDNWHHGVQRLVRDLNLTYRHHKAMHELDFDPYGFEWLVVDDKERSVLIFVRRDKEGNEIIVASNFTPVPRHDYRFGINQPGKWREILNTDSIHYHGSNAGNGGTVHSDEIASHGRQHSLSLTLPPLATIWLVREAE.

Aspartate 405 functions as the Nucleophile in the catalytic mechanism. The active-site Proton donor is the glutamate 458.

This sequence belongs to the glycosyl hydrolase 13 family. GlgB subfamily. As to quaternary structure, monomer.

The enzyme catalyses Transfers a segment of a (1-&gt;4)-alpha-D-glucan chain to a primary hydroxy group in a similar glucan chain.. The protein operates within glycan biosynthesis; glycogen biosynthesis. Catalyzes the formation of the alpha-1,6-glucosidic linkages in glycogen by scission of a 1,4-alpha-linked oligosaccharide from growing alpha-1,4-glucan chains and the subsequent attachment of the oligosaccharide to the alpha-1,6 position. In Shigella flexneri serotype 5b (strain 8401), this protein is 1,4-alpha-glucan branching enzyme GlgB.